The primary structure comprises 458 residues: ATP synthase subunit beta (458 aa).

Residue 148–155 (GGAGVGKT) participates in ATP binding.

It belongs to the ATPase alpha/beta chains family. F-type ATPases have 2 components, CF(1) - the catalytic core - and CF(0) - the membrane proton channel. CF(1) has five subunits: alpha(3), beta(3), gamma(1), delta(1), epsilon(1). CF(0) has three main subunits: a(1), b(2) and c(9-12). The alpha and beta chains form an alternating ring which encloses part of the gamma chain. CF(1) is attached to CF(0) by a central stalk formed by the gamma and epsilon chains, while a peripheral stalk is formed by the delta and b chains.

It is found in the cell inner membrane. It catalyses the reaction ATP + H2O + 4 H(+)(in) = ADP + phosphate + 5 H(+)(out). Produces ATP from ADP in the presence of a proton gradient across the membrane. The catalytic sites are hosted primarily by the beta subunits. The protein is ATP synthase subunit beta of Shewanella loihica (strain ATCC BAA-1088 / PV-4).